Reading from the N-terminus, the 1588-residue chain is Ubiquitin carboxyl-terminal hydrolase 54 (1588 aa).

The residue at position 12 (arginine 12) is an Omega-N-methylarginine. The USP domain maps to 31–352; sequence KGLSNEPGQN…QPLLLLYADP (322 aa). Residue cysteine 42 is the Nucleophile of the active site. Zn(2+) contacts are provided by histidine 67, cysteine 69, cysteine 74, cysteine 77, histidine 133, cysteine 145, cysteine 150, histidine 153, cysteine 166, cysteine 169, cysteine 225, and cysteine 229. Catalysis depends on histidine 302, which acts as the Proton acceptor. 2 stretches are compositionally biased toward basic and acidic residues: residues 382-391 and 424-434; these read GHLTDSECNQ and SEGETLKEKQA. Disordered stretches follow at residues 382–519, 555–577, and 601–624; these read GHLT…PTWR, FTPDEVSKPTANDIKDGGSRSQH, and ESGYESSERNSSSPVSLDAAPPDS. Serine 424 is subject to Phosphoserine. Residues 453 to 471 are compositionally biased toward polar residues; that stretch reads TVSNMIHSRPSLASQTSAG. A compositionally biased stretch (low complexity) spans 499-513; that stretch reads TESTSSEAKSSSSSK. Residues 555–572 are compositionally biased toward basic and acidic residues; sequence FTPDEVSKPTANDIKDGG. Residues 601–616 show a composition bias toward low complexity; it reads ESGYESSERNSSSPVS. Phosphoserine occurs at positions 613 and 616. The stretch at 682 to 712 forms a coiled coil; the sequence is ELDELQEEVVRRAQEQELRKKREKELEAAKG. Disordered stretches follow at residues 801-834, 1089-1182, 1221-1242, and 1491-1561; these read RSLQDRMQQQASSQQPVQPSASLPSQGGALPQPT, QNTS…PDMY, SQVKPSAPGPGDKSSSHDSHPR, and WGNL…RSPG. The span at 808 to 826 shows a compositional bias: low complexity; it reads QQQASSQQPVQPSASLPSQ. The span at 1126–1147 shows a compositional bias: basic and acidic residues; sequence GREHCRWVKQPRSPDGRERPPC. At serine 1138 the chain carries Phosphoserine. Over residues 1510–1524 the composition is skewed to polar residues; that stretch reads PSSNLHVPLRSTWNS. Residues 1536–1547 are compositionally biased toward basic and acidic residues; that stretch reads RRIDMPPDDDWR.

Belongs to the peptidase C19 family.

It carries out the reaction Thiol-dependent hydrolysis of ester, thioester, amide, peptide and isopeptide bonds formed by the C-terminal Gly of ubiquitin (a 76-residue protein attached to proteins as an intracellular targeting signal).. Deubiquitinase that specifically mediates 'Lys-63'-linked deubiquitination of substrates with a polyubiquitin chain composed of at least 3 ubiquitins. Specifically recognizes ubiquitin chain in position S2 and catalyzes cleavage of polyubiquitin within 'Lys-63'-linked chains. Not able to deubiquitinate substrates with shorter ubiquitin chains. Mediates deubiquitination of PLK4, maintaining PLK4 stability by reducing its ubiquitination-mediated degradation. This Mus musculus (Mouse) protein is Ubiquitin carboxyl-terminal hydrolase 54 (Usp54).